We begin with the raw amino-acid sequence, 176 residues long: Large ribosomal subunit protein bL17m (176 aa).

Residues 1–8 constitute a mitochondrion transit peptide; that stretch reads MRLSLAAA.

It belongs to the bacterial ribosomal protein bL17 family. As to quaternary structure, component of the mitochondrial ribosome large subunit (39S) which comprises a 16S rRNA and about 50 distinct proteins.

Its subcellular location is the mitochondrion. The sequence is that of Large ribosomal subunit protein bL17m (Mrpl17) from Rattus norvegicus (Rat).